Here is a 684-residue protein sequence, read N- to C-terminus: Mitochondrial translation factor ATP22 (684 aa).

Residues 1 to 56 (MLKCICRVYSQPLAQMVTSPLFKHMGSAGTYTILPITNLRHLSTKNCPLKIKSNRS) constitute a mitochondrion transit peptide.

Belongs to the ATP22 family.

It is found in the mitochondrion inner membrane. Translation factor specific for subunit 6 of the mitochondrial ATPase. Required for assembly of the CF(0) component of the ATPase. The chain is Mitochondrial translation factor ATP22 (ATP22) from Saccharomyces cerevisiae (strain AWRI1631) (Baker's yeast).